A 337-amino-acid polypeptide reads, in one-letter code: tRNA pseudouridine synthase D (337 aa).

Catalysis depends on aspartate 77, which acts as the Nucleophile. One can recognise a TRUD domain in the interval 152–308 (GFPNYFTEQR…ARDFHWEFVE (157 aa)).

It belongs to the pseudouridine synthase TruD family.

It catalyses the reaction uridine(13) in tRNA = pseudouridine(13) in tRNA. Functionally, responsible for synthesis of pseudouridine from uracil-13 in transfer RNAs. The polypeptide is tRNA pseudouridine synthase D (Mannheimia succiniciproducens (strain KCTC 0769BP / MBEL55E)).